The sequence spans 508 residues: Serine/threonine protein kinase OSK3 (508 aa).

A Protein kinase domain is found at 17 to 269 (YNLGRTLGIG…IREIREHQWF (253 aa)). ATP is bound by residues 23–31 (LGIGSFGKV) and Lys46. Asp140 functions as the Proton acceptor in the catalytic mechanism. One can recognise a UBA domain in the interval 290 to 330 (MIDEDTLQDVVNLGYGKDHVCESLRNRLQNEATVAYYLLLD). The 49-residue stretch at 459 to 507 (NGRLPAVIKFEIQLYKTRDEKYLLDMQRVTGPQLLFLDFCADFLTKLRV) folds into the KA1 domain.

Belongs to the protein kinase superfamily. Ser/Thr protein kinase family. As to quaternary structure, interacts with HDR1. Strongly expressed in immature seeds. Mostly expressed in panicles, and to a lower extent, in leaf sheaths.

The protein localises to the nucleus. The catalysed reaction is L-seryl-[protein] + ATP = O-phospho-L-seryl-[protein] + ADP + H(+). It catalyses the reaction L-threonyl-[protein] + ATP = O-phospho-L-threonyl-[protein] + ADP + H(+). This is Serine/threonine protein kinase OSK3 from Oryza sativa subsp. indica (Rice).